The primary structure comprises 160 residues: Cytochrome b6-f complex subunit 4 (160 aa).

3 helical membrane passes run 36-56, 95-115, and 128-148; these read LLYIFPVVILGTFACLVGLAV, LLGIVLQTLVPLGLMLIPFIE, and IAMAFFLFGTMITIYLGIGAC.

Belongs to the cytochrome b family. PetD subfamily. The 4 large subunits of the cytochrome b6-f complex are cytochrome b6, subunit IV (17 kDa polypeptide, PetD), cytochrome f and the Rieske protein, while the 4 small subunits are PetG, PetL, PetM and PetN. The complex functions as a dimer.

It localises to the cellular thylakoid membrane. Functionally, component of the cytochrome b6-f complex, which mediates electron transfer between photosystem II (PSII) and photosystem I (PSI), cyclic electron flow around PSI, and state transitions. The chain is Cytochrome b6-f complex subunit 4 from Prochlorococcus marinus (strain MIT 9303).